A 931-amino-acid polypeptide reads, in one-letter code: MTTGFLQKIFGSRNQRLVKQYQKTVETINALETQIEQLTDDQLRGKTDEFRQRVAAGESLDKLLPEAFAVCREASRRVLKMRHFDVQLIGGMVLHYGKIAEMRTGEGKTLVATLPVYLNALAGRGVHVVTVNDYLAQRDAEWMARLYNFLGLSVGINLSGMEHEQKQQAYASDITYGTNNEFGFDYLRDNMVYETEARVQRALNFAVVDEVDSILIDEARTPLIISGQAEDHTELYVRMNALPPLLERQIGEEKADGTGVEKPGDYTLDEKSRQVFLTESGHEKAERLLAEWGLIGEGESLYAPQNITLMHHVYAALRAHTLFYKDQHYVVQNGEVVIVDEFTGRLMAGRRWSDGLHQAVEAKEHVKIQSENQTLASITFQNYFRMYAKLAGMTGTADTEAYEFNEIYGLETVVIPTNRPPKRIDKQDQIYKTAKERYDAVIRDIRECYERGQPVLVGTTSIENSELLSHLLKQAGLPHEVLNAKQHEREAAIVAEAGRPKRITIATNMAGRGTDIVLGGNAEKQAAFIEADEAIPADEKARRIKQLHDEWETLHEQVKAAGGLHIIGTERHESRRIDNQLRGRAGRQGDPGSSRFYLSLDDPLLRIFAGDRVRSIMDRLKMPEGEAIEAGIVTRSIESAQRKVEARNFDIRKQLLEYDDVSNDQRKVIYQQRNELLEAHDITETISAMRHGVITEVVRQFVPEGSIEEQWDVPELEEALRNDWQLDLAIQEMVNESSSITADEILDAVTTAADEQYEAKVAMVGRESFSAFERSVMLQTVDRLWREHLAALDHLRQGIHLRGYAQKNPKQEYKREAFELFAAMLDAIKQEVTRIVMNVQIQSPEQLEEAAEQIEERTGHLENVEYQHADYAESGAPVANVAAATAATATADMVGSAMTHGHAGELPKVGRNDPCPCGSGKKYKQCHGKLS.

Residues Q87, 105 to 109 (GEGKT), and D515 each bind ATP. Zn(2+) contacts are provided by C915, C917, C926, and H927.

The protein belongs to the SecA family. In terms of assembly, monomer and homodimer. Part of the essential Sec protein translocation apparatus which comprises SecA, SecYEG and auxiliary proteins SecDF-YajC and YidC. Zn(2+) is required as a cofactor.

Its subcellular location is the cell inner membrane. The protein resides in the cytoplasm. It carries out the reaction ATP + H2O + cellular proteinSide 1 = ADP + phosphate + cellular proteinSide 2.. Functionally, part of the Sec protein translocase complex. Interacts with the SecYEG preprotein conducting channel. Has a central role in coupling the hydrolysis of ATP to the transfer of proteins into and across the cell membrane, serving both as a receptor for the preprotein-SecB complex and as an ATP-driven molecular motor driving the stepwise translocation of polypeptide chains across the membrane. This Burkholderia ambifaria (strain ATCC BAA-244 / DSM 16087 / CCUG 44356 / LMG 19182 / AMMD) (Burkholderia cepacia (strain AMMD)) protein is Protein translocase subunit SecA.